Reading from the N-terminus, the 209-residue chain is NADH-quinone oxidoreductase subunit C (209 aa).

Belongs to the complex I 30 kDa subunit family. As to quaternary structure, NDH-1 is composed of 14 different subunits. Subunits NuoB, C, D, E, F, and G constitute the peripheral sector of the complex.

The protein resides in the cell inner membrane. The catalysed reaction is a quinone + NADH + 5 H(+)(in) = a quinol + NAD(+) + 4 H(+)(out). Functionally, NDH-1 shuttles electrons from NADH, via FMN and iron-sulfur (Fe-S) centers, to quinones in the respiratory chain. The immediate electron acceptor for the enzyme in this species is believed to be ubiquinone. Couples the redox reaction to proton translocation (for every two electrons transferred, four hydrogen ions are translocated across the cytoplasmic membrane), and thus conserves the redox energy in a proton gradient. This Bordetella petrii (strain ATCC BAA-461 / DSM 12804 / CCUG 43448) protein is NADH-quinone oxidoreductase subunit C.